We begin with the raw amino-acid sequence, 542 residues long: CTP synthase (542 aa).

The interval 1-265 (MARYIFITGG…DQEVLAAFGI (265 aa)) is amidoligase domain. Ser-13 is a binding site for CTP. Ser-13 serves as a coordination point for UTP. Position 14–19 (14–19 (SLGKGL)) interacts with ATP. Tyr-54 is an L-glutamine binding site. Asp-71 contributes to the ATP binding site. Positions 71 and 139 each coordinate Mg(2+). Residues 146–148 (DIE), 186–191 (KTKPTQ), and Lys-222 each bind CTP. Residues 186–191 (KTKPTQ) and Lys-222 each bind UTP. 238–240 (RDV) is an ATP binding site. The Glutamine amidotransferase type-1 domain maps to 291-541 (TIAIVGKYTG…IAAALEQSRL (251 aa)). Gly-353 serves as a coordination point for L-glutamine. Cys-380 serves as the catalytic Nucleophile; for glutamine hydrolysis. L-glutamine-binding positions include 381-384 (FGMQ), Glu-404, and Arg-469. Residues His-514 and Glu-516 contribute to the active site.

This sequence belongs to the CTP synthase family. In terms of assembly, homotetramer.

The catalysed reaction is UTP + L-glutamine + ATP + H2O = CTP + L-glutamate + ADP + phosphate + 2 H(+). It carries out the reaction L-glutamine + H2O = L-glutamate + NH4(+). The enzyme catalyses UTP + NH4(+) + ATP = CTP + ADP + phosphate + 2 H(+). It participates in pyrimidine metabolism; CTP biosynthesis via de novo pathway; CTP from UDP: step 2/2. Its activity is regulated as follows. Allosterically activated by GTP, when glutamine is the substrate; GTP has no effect on the reaction when ammonia is the substrate. The allosteric effector GTP functions by stabilizing the protein conformation that binds the tetrahedral intermediate(s) formed during glutamine hydrolysis. Inhibited by the product CTP, via allosteric rather than competitive inhibition. In terms of biological role, catalyzes the ATP-dependent amination of UTP to CTP with either L-glutamine or ammonia as the source of nitrogen. Regulates intracellular CTP levels through interactions with the four ribonucleotide triphosphates. The protein is CTP synthase of Methylocella silvestris (strain DSM 15510 / CIP 108128 / LMG 27833 / NCIMB 13906 / BL2).